The sequence spans 274 residues: Undecaprenyl-diphosphatase (274 aa).

The next 8 helical transmembrane spans lie at 1–21 (MDWL…FLPI), 42–62 (VKDT…LVYY), 81–101 (LWLG…LFGD), 107–127 (LFRP…MWLL), 142–162 (ISAG…LWPG), 184–204 (TKFS…LDFI), 213–233 (IGVV…YFAI), and 248–268 (FAVY…RGVL).

This sequence belongs to the UppP family.

The protein localises to the cell membrane. The enzyme catalyses di-trans,octa-cis-undecaprenyl diphosphate + H2O = di-trans,octa-cis-undecaprenyl phosphate + phosphate + H(+). Its function is as follows. Catalyzes the dephosphorylation of undecaprenyl diphosphate (UPP). Confers resistance to bacitracin. The protein is Undecaprenyl-diphosphatase of Deinococcus radiodurans (strain ATCC 13939 / DSM 20539 / JCM 16871 / CCUG 27074 / LMG 4051 / NBRC 15346 / NCIMB 9279 / VKM B-1422 / R1).